We begin with the raw amino-acid sequence, 105 residues long: Small ribosomal subunit protein uS10 (105 aa).

The protein belongs to the universal ribosomal protein uS10 family. In terms of assembly, part of the 30S ribosomal subunit.

Involved in the binding of tRNA to the ribosomes. The chain is Small ribosomal subunit protein uS10 from Rickettsia felis (strain ATCC VR-1525 / URRWXCal2) (Rickettsia azadi).